The chain runs to 81 residues: Small ribosomal subunit protein bS18 (81 aa).

The protein belongs to the bacterial ribosomal protein bS18 family. In terms of assembly, part of the 30S ribosomal subunit. Forms a tight heterodimer with protein bS6.

In terms of biological role, binds as a heterodimer with protein bS6 to the central domain of the 16S rRNA, where it helps stabilize the platform of the 30S subunit. The chain is Small ribosomal subunit protein bS18 from Desulfotalea psychrophila (strain LSv54 / DSM 12343).